The following is a 121-amino-acid chain: Basic phospholipase A2 F17 (121 aa).

Cystine bridges form between Cys25/Cys114, Cys27/Cys43, Cys42/Cys94, Cys48/Cys121, Cys49/Cys87, Cys56/Cys80, and Cys74/Cys85. The Ca(2+) site is built by Tyr26, Gly28, and Gly30. The active site involves His46. Residue Asp47 coordinates Ca(2+). The active site involves Asp88.

Belongs to the phospholipase A2 family. Group II subfamily. D49 sub-subfamily. When this protein is associated with crotapotin (F5 or F7), it forms the crotoxin protein. Ca(2+) serves as cofactor. In terms of tissue distribution, expressed by the venom gland.

It is found in the secreted. The enzyme catalyses a 1,2-diacyl-sn-glycero-3-phosphocholine + H2O = a 1-acyl-sn-glycero-3-phosphocholine + a fatty acid + H(+). Its activity is regulated as follows. Activated by heparin. Inhibited by its chaperone crotapotin. Snake venom phospholipase A2 (PLA2) that has anticoagulant activity and inhibits bactericial growth of the Gram-negative bacteria Xanthomonas axonopodis pv. passiflorae (in monomeric form). PLA2 catalyzes the calcium-dependent hydrolysis of the 2-acyl groups in 3-sn-phosphoglycerides. The protein is Basic phospholipase A2 F17 of Crotalus durissus terrificus (South American rattlesnake).